We begin with the raw amino-acid sequence, 411 residues long: Serine--tRNA ligase (411 aa).

Residue 226–228 participates in L-serine binding; sequence TSE. 257–259 contributes to the ATP binding site; it reads RKE. Glu-280 lines the L-serine pocket. Position 344-347 (344-347) interacts with ATP; the sequence is EISS. An L-serine-binding site is contributed by Ser-379.

Belongs to the class-II aminoacyl-tRNA synthetase family. Type-1 seryl-tRNA synthetase subfamily. As to quaternary structure, homodimer. The tRNA molecule binds across the dimer.

It is found in the cytoplasm. The catalysed reaction is tRNA(Ser) + L-serine + ATP = L-seryl-tRNA(Ser) + AMP + diphosphate + H(+). It carries out the reaction tRNA(Sec) + L-serine + ATP = L-seryl-tRNA(Sec) + AMP + diphosphate + H(+). It functions in the pathway aminoacyl-tRNA biosynthesis; selenocysteinyl-tRNA(Sec) biosynthesis; L-seryl-tRNA(Sec) from L-serine and tRNA(Sec): step 1/1. Functionally, catalyzes the attachment of serine to tRNA(Ser). Is also able to aminoacylate tRNA(Sec) with serine, to form the misacylated tRNA L-seryl-tRNA(Sec), which will be further converted into selenocysteinyl-tRNA(Sec). This is Serine--tRNA ligase from Campylobacter jejuni subsp. jejuni serotype O:2 (strain ATCC 700819 / NCTC 11168).